We begin with the raw amino-acid sequence, 654 residues long: U-box domain-containing protein 12 (654 aa).

One can recognise a U-box domain in the interval 255–329 (IPPEEFRCPI…AQWCESNGIE (75 aa)). The tract at residues 329 to 352 (EPPKRPNISQPSSKASSSSSAPDD) is disordered. Low complexity predominate over residues 337–349 (SQPSSKASSSSSA). ARM repeat units follow at residues 387–427 (NHNR…NLSI), 430–469 (ENKG…SLSV), 471–510 (DENK…NLCI), 512–551 (QGNK…ILSS), and 553–592 (PDGK…HLCS).

It catalyses the reaction S-ubiquitinyl-[E2 ubiquitin-conjugating enzyme]-L-cysteine + [acceptor protein]-L-lysine = [E2 ubiquitin-conjugating enzyme]-L-cysteine + N(6)-ubiquitinyl-[acceptor protein]-L-lysine.. It functions in the pathway protein modification; protein ubiquitination. In terms of biological role, functions as an E3 ubiquitin ligase. The protein is U-box domain-containing protein 12 (PUB12) of Arabidopsis thaliana (Mouse-ear cress).